The chain runs to 417 residues: Serine hydroxymethyltransferase (417 aa).

Residues Leu-122 and 126–128 each bind (6S)-5,6,7,8-tetrahydrofolate; that span reads GHL. An N6-(pyridoxal phosphate)lysine modification is found at Lys-230. 355–357 contacts (6S)-5,6,7,8-tetrahydrofolate; it reads SPF.

This sequence belongs to the SHMT family. As to quaternary structure, homodimer. It depends on pyridoxal 5'-phosphate as a cofactor.

Its subcellular location is the cytoplasm. The enzyme catalyses (6R)-5,10-methylene-5,6,7,8-tetrahydrofolate + glycine + H2O = (6S)-5,6,7,8-tetrahydrofolate + L-serine. Its pathway is one-carbon metabolism; tetrahydrofolate interconversion. The protein operates within amino-acid biosynthesis; glycine biosynthesis; glycine from L-serine: step 1/1. Catalyzes the reversible interconversion of serine and glycine with tetrahydrofolate (THF) serving as the one-carbon carrier. This reaction serves as the major source of one-carbon groups required for the biosynthesis of purines, thymidylate, methionine, and other important biomolecules. Also exhibits THF-independent aldolase activity toward beta-hydroxyamino acids, producing glycine and aldehydes, via a retro-aldol mechanism. The polypeptide is Serine hydroxymethyltransferase (Francisella tularensis subsp. mediasiatica (strain FSC147)).